We begin with the raw amino-acid sequence, 367 residues long: 3-dehydroquinate synthase (367 aa).

Residues 69–74, 103–107, 127–128, K140, and K149 each bind NAD(+); these read DGEAFK, GVIGD, and TT. E182, H245, and H262 together coordinate Zn(2+).

It belongs to the sugar phosphate cyclases superfamily. Dehydroquinate synthase family. Co(2+) is required as a cofactor. Requires Zn(2+) as cofactor. It depends on NAD(+) as a cofactor.

The protein resides in the cytoplasm. It catalyses the reaction 7-phospho-2-dehydro-3-deoxy-D-arabino-heptonate = 3-dehydroquinate + phosphate. It participates in metabolic intermediate biosynthesis; chorismate biosynthesis; chorismate from D-erythrose 4-phosphate and phosphoenolpyruvate: step 2/7. Its function is as follows. Catalyzes the conversion of 3-deoxy-D-arabino-heptulosonate 7-phosphate (DAHP) to dehydroquinate (DHQ). The polypeptide is 3-dehydroquinate synthase (Ectopseudomonas mendocina (strain ymp) (Pseudomonas mendocina)).